The primary structure comprises 505 residues: MEAIQRYLQFDRSQQLSFLYPLIFQEYIYAFARDHSLNRAILLENPGYDNKSSFLIVKRLITRMYQQNHFIISANDSSQNPFFGRNKNLYSKMISEGFSFIIEIPLSTRLISSEELKGILKSPNLRSIHSIFPFLEDNFSHFHFVLDILIPHPVHLEILFQTLRYWLKDAPSLHLLRXXXXXXXXXXXXXXXXXXXXXXXXXXXXXXXXXXXXXXXXXXXXXXXXXXXXXXXXXXXXXXXXXXXXXXXXXXXXXXXXXXXXXXXXXXXXXXXXXXXXXXXXXXXXXXXXXXXXXXXXXXXXXXXXXXXXXLWFHSERVYIKQLSNHSLDFMGYFSIVRLNPSMVRSQMLENXFLINNAIKKFDTLVPMIPLIGSLSKAKFCNLFGHPISKSARTDLSDSDIMDRFGRICRNLSHYHSGSSKKKSLYRIKYILRLSCAKTLARKHKSTVRAFLKRLGSEFFEEFLMSEEETLCLTFPRVSSPFWGVYGSRIWYLDITCINDLANQQ.

The protein belongs to the intron maturase 2 family. MatK subfamily.

Its subcellular location is the plastid. The protein resides in the chloroplast. Its function is as follows. Usually encoded in the trnK tRNA gene intron. Probably assists in splicing its own and other chloroplast group II introns. In Allamanda cathartica (Yellow allamanda), this protein is Maturase K.